A 610-amino-acid chain; its full sequence is Serine/threonine-protein kinase VRK1 (610 aa).

In terms of domain architecture, Protein kinase spans 32-384 (FIVGKQFATG…PRKRTTRKAV (353 aa)). Residues 38 to 46 (FATGGFGRI) and lysine 61 each bind ATP. Residue aspartate 167 is the Proton acceptor of the active site. Disordered regions lie at residues 317–476 (IQKT…NKVA), 498–530 (ISVASDKSPTTSTPSSSSGLRSKRKSSEDVGEG), 544–577 (KKAKTKSGISSATKASPTELRRVPGVRNFPKGRR), and 590–610 (ERLASRQTKPTFDDSSCSSEV). The span at 352-373 (AVKEESDNKDNDEVEVKPEKKA) shows a compositional bias: basic and acidic residues. Acidic residues predominate over residues 388 to 397 (NDSDDNEEQY). The span at 447–458 (TTPSSAASTSRS) shows a compositional bias: low complexity. The span at 465-474 (LTSSTASSNK) shows a compositional bias: polar residues. Positions 502-517 (SDKSPTTSTPSSSSGL) are enriched in low complexity. 2 stretches are compositionally biased toward polar residues: residues 550–559 (SGISSATKAS) and 594–610 (SRQTKPTFDDSSCSSEV).

It belongs to the protein kinase superfamily. CK1 Ser/Thr protein kinase family. VRK subfamily. Post-translationally, autophosphorylates in vitro. Present in germ cells at all stages of progression from the mitotic zone to mature oocytes, but not in maturing spermatids (at the protein level). Expressed in the ventral nerve cord and vulva cells.

The protein resides in the nucleus. It is found in the cytoplasm. Its subcellular location is the cajal body. It catalyses the reaction L-seryl-[protein] + ATP = O-phospho-L-seryl-[protein] + ADP + H(+). The enzyme catalyses L-threonyl-[protein] + ATP = O-phospho-L-threonyl-[protein] + ADP + H(+). Functionally, serine/threonine kinase that phosphorylates baf-1, thus regulating the association of baf-1 with chromatin and nuclear membrane proteins during nuclear envelope formation. May act through the egl-17 signaling pathway. Essential in hermaphrodites for formation of the vulva, uterus, and uterine seam cells and for development and maintenance of the somatic gonad and thus the germ line. Acts to prevent cep-1 from triggering an inappropriate cell cycle arrest, thereby promoting germ cell proliferation. Regulates anchor cell polarity and the timing of anchor cell invasion through the basement membranes separating vulval and somatic gonadal cells during the L3 larval stage. The protein is Serine/threonine-protein kinase VRK1 of Caenorhabditis elegans.